The primary structure comprises 932 residues: 2-oxoglutarate dehydrogenase E1 component (932 aa).

It belongs to the alpha-ketoglutarate dehydrogenase family. Homodimer. Part of the 2-oxoglutarate dehydrogenase (OGDH) complex composed of E1 (2-oxoglutarate dehydrogenase), E2 (dihydrolipoamide succinyltransferase) and E3 (dihydrolipoamide dehydrogenase); the complex contains multiple copies of the three enzymatic components (E1, E2 and E3). The cofactor is thiamine diphosphate.

The enzyme catalyses N(6)-[(R)-lipoyl]-L-lysyl-[protein] + 2-oxoglutarate + H(+) = N(6)-[(R)-S(8)-succinyldihydrolipoyl]-L-lysyl-[protein] + CO2. In terms of biological role, E1 component of the 2-oxoglutarate dehydrogenase (OGDH) complex which catalyzes the decarboxylation of 2-oxoglutarate, the first step in the conversion of 2-oxoglutarate to succinyl-CoA and CO(2). The chain is 2-oxoglutarate dehydrogenase E1 component from Staphylococcus aureus (strain USA300).